Here is a 292-residue protein sequence, read N- to C-terminus: 1,4-dihydroxy-2-naphthoate octaprenyltransferase (292 aa).

Helical transmembrane passes span 35–55 (AAVW…VIGV), 101–121 (ALAG…VGAI), 137–157 (GYAG…AVLG), 166–186 (VDWV…SVLV), 220–240 (LLAV…WCVV), and 271–291 (TGLA…FGQL).

The protein belongs to the MenA family. Type 1 subfamily. Requires Mg(2+) as cofactor.

Its subcellular location is the cell membrane. The catalysed reaction is an all-trans-polyprenyl diphosphate + 1,4-dihydroxy-2-naphthoate + H(+) = a 2-demethylmenaquinol + CO2 + diphosphate. The protein operates within quinol/quinone metabolism; menaquinone biosynthesis; menaquinol from 1,4-dihydroxy-2-naphthoate: step 1/2. With respect to regulation, activity is abolished by EDTA. Inhibited by Ro 48-8071, which is non-competitive with regard to DHNA and competitive with regard to the isoprenyldiphosphate substrate. Conversion of 1,4-dihydroxy-2-naphthoate (DHNA) to demethylmenaquinone (DMK). Can use a variety of allylic isoprenyl diphosphates as substrates but has a requirement for at least three isoprene units. This chain is 1,4-dihydroxy-2-naphthoate octaprenyltransferase, found in Mycobacterium tuberculosis (strain ATCC 25618 / H37Rv).